The following is a 362-amino-acid chain: Ferrochelatase (362 aa).

Residues His228 and Glu309 each coordinate Fe cation.

This sequence belongs to the ferrochelatase family.

The protein resides in the cytoplasm. The enzyme catalyses heme b + 2 H(+) = protoporphyrin IX + Fe(2+). The protein operates within porphyrin-containing compound metabolism; protoheme biosynthesis; protoheme from protoporphyrin-IX: step 1/1. Its function is as follows. Catalyzes the ferrous insertion into protoporphyrin IX. In Bordetella pertussis (strain Tohama I / ATCC BAA-589 / NCTC 13251), this protein is Ferrochelatase.